Consider the following 615-residue polypeptide: Protein DlpA (615 aa).

It belongs to the isocitrate and isopropylmalate dehydrogenases family. To M.jannaschii MJ0644 in the C-terminal section.

This chain is Protein DlpA (dlpA), found in Legionella pneumophila subsp. pneumophila (strain Philadelphia 1 / ATCC 33152 / DSM 7513).